The chain runs to 21 residues: 78 kDa dihydrolipoyllysine-residue acetyltransferase component of pyruvate dehydrogenase complex (21 aa).

The protein belongs to the 2-oxoacid dehydrogenase family. As to quaternary structure, forms a 60-polypeptide structural core. Requires (R)-lipoate as cofactor.

The protein resides in the mitochondrion matrix. The enzyme catalyses N(6)-[(R)-dihydrolipoyl]-L-lysyl-[protein] + acetyl-CoA = N(6)-[(R)-S(8)-acetyldihydrolipoyl]-L-lysyl-[protein] + CoA. Functionally, the pyruvate dehydrogenase complex catalyzes the overall conversion of pyruvate to acetyl-CoA and CO(2). It contains multiple copies of three enzymatic components: pyruvate dehydrogenase (E1), dihydrolipoamide acetyltransferase (E2) and lipoamide dehydrogenase (E3). This is 78 kDa dihydrolipoyllysine-residue acetyltransferase component of pyruvate dehydrogenase complex from Solanum tuberosum (Potato).